A 499-amino-acid polypeptide reads, in one-letter code: Signal recognition particle subunit SRP54 2 (499 aa).

Positions 1–295 (MVLAELGGSI…DVKPFVSRLL (295 aa)) are G-domain. GTP is bound by residues 108–115 (GLQGSGKT), 190–194 (DTSGR), and 248–251 (TKMD). The tract at residues 296-499 (GMGDWSGFMD…MGGMFGGGDK (204 aa)) is M-domain.

It belongs to the GTP-binding SRP family. SRP54 subfamily. As to quaternary structure, component of a signal recognition particle (SRP) complex that consists of a 7SL RNA molecule of 300 nucleotides and six protein subunits: SRP72, SRP68, SRP54, SRP19, SRP14 and SRP9.

The protein localises to the cytoplasm. The protein resides in the endoplasmic reticulum. The enzyme catalyses GTP + H2O = GDP + phosphate + H(+). Its function is as follows. Component of the signal recognition particle (SRP) complex, a ribonucleoprotein complex that mediates the cotranslational targeting of secretory and membrane proteins to the endoplasmic reticulum (ER). As part of the SRP complex, associates with the SRP receptor (SR) component SRPRA to target secretory proteins to the endoplasmic reticulum membrane. Binds to the signal sequence of presecretory proteins when they emerge from the ribosomes. Displays basal GTPase activity, and stimulates reciprocal GTPase activation of the SR subunit SRPRA. Forms a guanosine 5'-triphosphate (GTP)-dependent complex with the SR subunit SRPRA. SR compaction and GTPase mediated rearrangement of SR drive SRP-mediated cotranslational protein translocation into the ER. Requires the presence of SRP9/SRP14 and/or SRP19 to stably interact with RNA. This chain is Signal recognition particle subunit SRP54 2, found in Solanum lycopersicum (Tomato).